A 368-amino-acid polypeptide reads, in one-letter code: Methionine import ATP-binding protein MetN (368 aa).

An ABC transporter domain is found at 5–260 (IELNNLSVQF…PKEALTKQFI (256 aa)). Residue 41-48 (GYSGAGKS) participates in ATP binding.

Belongs to the ABC transporter superfamily. Methionine importer (TC 3.A.1.24) family. As to quaternary structure, the complex is composed of two ATP-binding proteins (MetN), two transmembrane proteins (MetI) and a solute-binding protein (MetQ).

It localises to the cell membrane. It catalyses the reaction L-methionine(out) + ATP + H2O = L-methionine(in) + ADP + phosphate + H(+). The enzyme catalyses D-methionine(out) + ATP + H2O = D-methionine(in) + ADP + phosphate + H(+). In terms of biological role, part of the ABC transporter complex MetNIQ involved in methionine import. Responsible for energy coupling to the transport system. This chain is Methionine import ATP-binding protein MetN, found in Lactococcus lactis subsp. cremoris (strain SK11).